We begin with the raw amino-acid sequence, 590 residues long: FAD-linked oxidoreductase malF (590 aa).

The signal sequence occupies residues 1–18 (MKYTATFALLILAIGIQT). Residues asparagine 44, asparagine 80, asparagine 103, asparagine 178, and asparagine 396 are each glycosylated (N-linked (GlcNAc...) asparagine). The region spanning 117–303 (AQGRIPLYSA…TSVTLRAFAD (187 aa)) is the FAD-binding PCMH-type domain.

Belongs to the oxygen-dependent FAD-linked oxidoreductase family. The cofactor is FAD.

FAD-linked oxidoreductase; part of the gene cluster that mediates the biosynthesis of malbrancheamide, a dichlorinated fungal indole alkaloid that belongs to a family of natural products containing a characteristic bicyclo[2.2.2]diazaoctane core. The first step of malbrancheamide biosynthesis involves coupling of L-proline and L-tryptophan by malG, a bimodular NRPS, to produce L-Pro-L-Trp aldehyde through reductive offloading. This compound undergoes spontaneous cyclization and dehydration to give a dienamine which is reverse prenylated at C-2 by malE. The other prenyltransferase present in the cluster, malB, displays modest activity, suggesting that may be a redundant gene in the pathway. Subsequently, a [4+2] Diels-Alder cyclo-addition catalyzed by the bifunctional enzyme malC forms the characteristic bicyclo[2.2.2]diazaoctane ring of premalbrancheamid. Finally, the flavin-dependent halogenase malA catalyzes the iterative dichlorination of the indole ring of premalbrancheamide to yield C-9 monochlorinated malbrancheamide B, C-8 monochlorinated isomalbrancheamide B, and dichlorinated malbrancheamide. MalA is also able to brominate premalbrancheamide at C-9 to yield malbrancheamide C, and, to a lesser extend, at C-8 to yield isomalbrancheamide C. Finally, malA can brominate C-9 monochlorinated malbrancheamide B at C-8 to yield malbrancheamide D, or C-8 monochlorinated isomalbrancheamide B at C-9 to produce isomalbrancheamide D. This chain is FAD-linked oxidoreductase malF, found in Malbranchea aurantiaca.